A 969-amino-acid polypeptide reads, in one-letter code: RNA polymerase-associated protein RapA (969 aa).

The Helicase ATP-binding domain maps to 162–339; the sequence is EVGQRVAPRV…FARLALLDAD (178 aa). 175–182 is an ATP binding site; it reads DEVGLGKT. The short motif at 285–288 is the DEAH box element; that stretch reads DEAH. The Helicase C-terminal domain occupies 492 to 663; the sequence is RIEWLITFLK…GFLKNPQAVG (172 aa).

This sequence belongs to the SNF2/RAD54 helicase family. RapA subfamily. Interacts with the RNAP. Has a higher affinity for the core RNAP than for the holoenzyme. Its ATPase activity is stimulated by binding to RNAP.

Transcription regulator that activates transcription by stimulating RNA polymerase (RNAP) recycling in case of stress conditions such as supercoiled DNA or high salt concentrations. Probably acts by releasing the RNAP, when it is trapped or immobilized on tightly supercoiled DNA. Does not activate transcription on linear DNA. Probably not involved in DNA repair. The polypeptide is RNA polymerase-associated protein RapA (Actinobacillus pleuropneumoniae serotype 5b (strain L20)).